Reading from the N-terminus, the 176-residue chain is Capsid protein (176 aa).

The interval 103–132 (RGEGAQTRNAKRGAAPGTSQVENEEQGQTD) is disordered.

It belongs to the virgaviridae capsid protein family.

It localises to the virion. Capsid protein self-assembles to form rod-shaped virions about 20 nm in diameter with a central canal enclosing the viral genomic RNA. Isoform N-CP does not seem to be required for virion formation and systemic infection in host plant. This chain is Capsid protein (CP), found in Hordeum vulgare (Barley).